A 316-amino-acid chain; its full sequence is Putative mannose-6-phosphate isomerase YvyI (316 aa).

Residues His-98, Glu-116, and His-173 each coordinate Zn(2+). The active site involves Arg-193.

It belongs to the mannose-6-phosphate isomerase type 1 family. It depends on Zn(2+) as a cofactor.

The enzyme catalyses D-mannose 6-phosphate = D-fructose 6-phosphate. In Bacillus subtilis (strain 168), this protein is Putative mannose-6-phosphate isomerase YvyI (yvyI).